The primary structure comprises 802 residues: Probable inactive leucine-rich repeat receptor-like protein kinase At3g03770 (802 aa).

An N-terminal signal peptide occupies residues 1-26; sequence MEKLYCGMPLLLLVLLLASIDGSTQL. Residues 27–391 are Extracellular-facing; sequence QSSQSQTLLR…RNKVSKVGIA (365 aa). Asn52 and Asn83 each carry an N-linked (GlcNAc...) asparagine glycan. LRR repeat units lie at residues 71 to 94, 104 to 128, 129 to 152, 153 to 176, 177 to 200, 201 to 225, 227 to 244, 245 to 268, 269 to 293, 294 to 317, and 319 to 341; these read EDSVTQLHIIGDNGTHMLPKSFSI, LPDVKVLTFVSLGLWGWLPQKINRL, SSLEILNVSSNFLFGPIPHELSSL, ATLQTLILDENMFSGELPDWIDSL, PSLAVLSLRKNVLNGSLPSSLSSL, SGLRVLALANNRFNGALPDLSHLTN, QVLDLEGNSFGPLFPRLS, NKLVTLILSKNKFRSAVSAEEVSS, LYQLQHLDLSYNTFVGPFPTSLMSL, PAITYLNISHNKLTGRLSANLSCN, and QLMFVDMSSNLLTGSLPTCLKPS. Residue Asn135 is glycosylated (N-linked (GlcNAc...) asparagine). N-linked (GlcNAc...) asparagine glycosylation occurs at Asn190. Asn300 and Asn313 each carry an N-linked (GlcNAc...) asparagine glycan. The chain crosses the membrane as a helical span at residues 392 to 412; the sequence is LGVTASILGVLLLAGALFVVL. Residues 413-802 lie on the Cytoplasmic side of the membrane; it reads RRLNAKKTVT…RDSGCEEHER (390 aa). The 283-residue stretch at 477 to 759 folds into the Protein kinase domain; the sequence is FESSAFMGEG…FASQVQEGWL (283 aa). A disordered region spans residues 761-802; it reads NSNPSSNLGSPSPAASSLPPPSRLHVTTLESPRDSGCEEHER. The segment covering 762–777 has biased composition (low complexity); the sequence is SNPSSNLGSPSPAASS. Residues 791–802 are compositionally biased toward basic and acidic residues; that stretch reads SPRDSGCEEHER.

It belongs to the protein kinase superfamily. Ser/Thr protein kinase family.

It is found in the cell membrane. This chain is Probable inactive leucine-rich repeat receptor-like protein kinase At3g03770, found in Arabidopsis thaliana (Mouse-ear cress).